The sequence spans 644 residues: Exoribonuclease 2 (644 aa).

The RNB domain maps to 189 to 516 (RQDLTALNFV…NHRLLKAVIK (328 aa)). The S1 motif domain occupies 561–643 (NTRFAAEIID…ETRSIIARPA (83 aa)).

Belongs to the RNR ribonuclease family. RNase II subfamily.

Its subcellular location is the cytoplasm. It catalyses the reaction Exonucleolytic cleavage in the 3'- to 5'-direction to yield nucleoside 5'-phosphates.. Its function is as follows. Involved in mRNA degradation. Hydrolyzes single-stranded polyribonucleotides processively in the 3' to 5' direction. This Salmonella dublin (strain CT_02021853) protein is Exoribonuclease 2.